We begin with the raw amino-acid sequence, 195 residues long: 3-isopropylmalate dehydratase small subunit (195 aa).

Belongs to the LeuD family. LeuD type 1 subfamily. Heterodimer of LeuC and LeuD.

The catalysed reaction is (2R,3S)-3-isopropylmalate = (2S)-2-isopropylmalate. It functions in the pathway amino-acid biosynthesis; L-leucine biosynthesis; L-leucine from 3-methyl-2-oxobutanoate: step 2/4. Catalyzes the isomerization between 2-isopropylmalate and 3-isopropylmalate, via the formation of 2-isopropylmaleate. This chain is 3-isopropylmalate dehydratase small subunit, found in Salinispora arenicola (strain CNS-205).